We begin with the raw amino-acid sequence, 176 residues long: Gamma-crystallin M2 (176 aa).

Beta/gamma crystallin 'Greek key' domains follow at residues 2 to 40 (GKVI…RVEG) and 41 to 83 (GCWV…RIIP). Residues 84-88 (QYRGS) form a connecting peptide region. Beta/gamma crystallin 'Greek key' domains lie at 89 to 129 (YRMR…HVMD) and 130 to 172 (GYWI…RRIM).

The protein belongs to the beta/gamma-crystallin family. Monomer.

In terms of biological role, crystallins are the dominant structural components of the vertebrate eye lens. This chain is Gamma-crystallin M2 (GM2), found in Chiloscyllium indicum (Slender bamboo shark).